Consider the following 659-residue polypeptide: Crossover junction endonuclease MUS81 (659 aa).

The short motif at 59 to 78 (KDLSQIKGFGKWMVKLMKGY) is the Helix-hairpin-helix motif 1 element. In terms of domain architecture, ERCC4 spans 404-503 (ILILDDREKF…KKLIYILEGD (100 aa)). The short motif at 585-622 (TISDVFAIQLMQVPQVTEEIAIAVLDMYPTLLSLASAY) is the Helix-hairpin-helix motif 2 element.

This sequence belongs to the XPF family. In terms of assembly, forms a heterodimer with EME1A or EME1B. It depends on Mg(2+) as a cofactor. Ca(2+) serves as cofactor. Ubiquitous but preferentially expressed in young flowers buds, notably in anthers.

The protein resides in the nucleus. It is found in the nucleolus. Interacts with EME1 to form a DNA structure-specific endonuclease with substrate preference for branched DNA structures with a 5'-end at the branch nick. Typical substrates include 3'-flap structures, D-loops, replication forks, nicked Holliday junctions and also intact Holliday junctions with a reduced efficiency. May be required in mitosis for the processing of stalled or collapsed replication fork intermediates. Plays a role in DNA repair and in genotoxic stress-induced homologous recombination (HR) in somatic cells. Mediates a subset of meiotic recombination events that are insensitive to crossover interference. Together with SEND1, essential for the resolution of toxic replication structures to ensure genome stability, and to maintain telomere integrity and replication. The protein is Crossover junction endonuclease MUS81 of Arabidopsis thaliana (Mouse-ear cress).